The sequence spans 489 residues: Acetylcholine receptor subunit beta (489 aa).

Positions 1–20 (NSGALLWPLIWGLLLIGTQA) are cleaved as a signal peptide. At 21 to 235 (LDKEAQLRDK…ITFYLVIQRK (215 aa)) the chain is on the extracellular side. N-linked (GlcNAc...) asparagine glycans are attached at residues Asn135 and Asn161. Cys148 and Cys162 are oxidised to a cystine. 3 consecutive transmembrane segments (helical) span residues 236-260 (PLFYIVNVIVPCILITILAIFVFYL), 268-286 (MTLSIFALLTLTVFLLLLA), and 302-323 (YLIFTMTLVTFSVIFSVVVLNL). The Cytoplasmic segment spans residues 324 to 457 (HHRSPNTHHM…WQYVAMVVDR (134 aa)). Residues 458-476 (LFLWTFIAFTSLGTLSIFL) form a helical membrane-spanning segment.

Belongs to the ligand-gated ion channel (TC 1.A.9) family. Acetylcholine receptor (TC 1.A.9.1) subfamily. Beta-1/CHRNB1 sub-subfamily. Pentamer of two alpha chains, and one each of the beta, delta, and gamma (in immature muscle) or epsilon (in mature muscle) chains.

The protein localises to the postsynaptic cell membrane. It is found in the cell membrane. The catalysed reaction is K(+)(in) = K(+)(out). It carries out the reaction Na(+)(in) = Na(+)(out). In terms of biological role, after binding acetylcholine, the AChR responds by an extensive change in conformation that affects all subunits and leads to opening of an ion-conducting channel across the plasma membrane. The protein is Acetylcholine receptor subunit beta (chrnb1) of Xenopus laevis (African clawed frog).